We begin with the raw amino-acid sequence, 425 residues long: Protein-glutamate methylesterase/protein-glutamine glutaminase (425 aa).

The Response regulatory domain maps to 22–140 (RVMVVDDSVV…EVAAADIFRH (119 aa)). Aspartate 73 is subject to 4-aspartylphosphate. Disordered stretches follow at residues 150–174 (AAKR…SNAS) and 203–223 (VQRE…RPQP). Residues 221–417 (PQPTLRSFSA…PLQQIAPKLV (197 aa)) form the CheB-type methylesterase domain. Residues serine 241, histidine 269, and aspartate 365 contribute to the active site.

Belongs to the CheB family. Phosphorylated by CheA. Phosphorylation of the N-terminal regulatory domain activates the methylesterase activity.

Its subcellular location is the cytoplasm. It catalyses the reaction [protein]-L-glutamate 5-O-methyl ester + H2O = L-glutamyl-[protein] + methanol + H(+). The enzyme catalyses L-glutaminyl-[protein] + H2O = L-glutamyl-[protein] + NH4(+). In terms of biological role, involved in chemotaxis. Part of a chemotaxis signal transduction system that modulates chemotaxis in response to various stimuli. Catalyzes the demethylation of specific methylglutamate residues introduced into the chemoreceptors (methyl-accepting chemotaxis proteins or MCP) by CheR. Also mediates the irreversible deamidation of specific glutamine residues to glutamic acid. The polypeptide is Protein-glutamate methylesterase/protein-glutamine glutaminase (Nitrobacter winogradskyi (strain ATCC 25391 / DSM 10237 / CIP 104748 / NCIMB 11846 / Nb-255)).